A 653-amino-acid polypeptide reads, in one-letter code: E3 ubiquitin-protein ligase TRIM32 (653 aa).

The residue at position 2 (Ala-2) is an N-acetylalanine. An RING-type zinc finger spans residues 20–65 (CPICMESFTEEQLRPKLLHCGHTICRQCLEKLLASSINGVRCPFCS). A Phosphoserine; by CHEK2 modification is found at Ser-55. Positions 100, 103, 123, and 128 each coordinate Zn(2+). The segment at 103–133 (CGRRLPRQFCRSCGLVLCEPCREADHQPPGH) adopts a B box-type zinc-finger fold. A coiled-coil region spans residues 138–197 (VKEAAEERRRDFGEKLTRLRELMGELQRRKAALEGVSKDLQARYKAVLQEYGHEERRVQD). Residues Ser-328, Ser-335, and Ser-339 each carry the phosphoserine modification. NHL repeat units follow at residues 358-401 (LKKM…FTRK), 415-458 (DSFV…YTLD), 459-499 (GHCV…FTVD), 562-605 (GRQI…FPKG), and 606-646 (GGYS…YSYH).

This sequence belongs to the TRIM/RBCC family. As to quaternary structure, it self-associates. Interacts with DTNBP1. Interacts with PIAS4/PIASY upon treatment with UVB and TNF-alpha. Interacts with AMBRA1; promoting activation of ULK1 through unanchored 'Lys-63'-linked polyubiquitin chains. Interacts with TICAM1 and TAX1BP1; these interactions target TICAM1 to TAX1BP1-mediated selective autophagic degradation. In terms of assembly, (Microbial infection) Interacts with S.typhimurium protein SseK3; SseK3 does not glycosylate TRIM32. Ubiquitinated. Post-translationally, phosphorylation at Ser-55 by CHEK2 under oxidative stress, activates the E3 ligase activity and promotes ATG7 ubiquitination leading to positive regulation of the autophagosme assembly. As to expression, spleen, thymus, prostate, testis, ovary, intestine, colon and skeletal muscle.

It is found in the cytoplasm. It localises to the mitochondrion. The protein localises to the endoplasmic reticulum. It carries out the reaction S-ubiquitinyl-[E2 ubiquitin-conjugating enzyme]-L-cysteine + [acceptor protein]-L-lysine = [E2 ubiquitin-conjugating enzyme]-L-cysteine + N(6)-ubiquitinyl-[acceptor protein]-L-lysine.. The protein operates within protein modification; protein ubiquitination. In terms of biological role, E3 ubiquitin ligase that plays a role in various biological processes including neural stem cell differentiation, innate immunity, inflammatory resonse and autophagy. Plays a role in virus-triggered induction of IFN-beta and TNF-alpha by mediating the ubiquitination of STING1. Mechanistically, targets STING1 for 'Lys-63'-linked ubiquitination which promotes the interaction of STING1 with TBK1. Regulates bacterial clearance and promotes autophagy in Mycobacterium tuberculosis-infected macrophages. Negatively regulates TLR3/4-mediated innate immune and inflammatory response by triggering the autophagic degradation of TICAM1 in an E3 activity-independent manner. Plays an essential role in oxidative stress induced cell death by inducing loss of transmembrane potential and enhancing mitochondrial reactive oxygen species (ROS) production during oxidative stress conditions. Ubiquitinates XIAP and targets it for proteasomal degradation. Ubiquitinates DTNBP1 (dysbindin) and promotes its degradation. May ubiquitinate BBS2. Ubiquitinates PIAS4/PIASY and promotes its degradation in keratinocytes treated with UVB and TNF-alpha. Also acts as a regulator of autophagy by mediating formation of unanchored 'Lys-63'-linked polyubiquitin chains that activate ULK1: interaction with AMBRA1 is required for ULK1 activation. Positively regulates dendritic branching by promoting ubiquitination and subsequent degradation of the epigenetic factor CDYL. Under metabolic stress and phosphorylation by CHK2, mediates 'Lys-63'-linked ubiquitination of ATG7 at 'Lys-45' to initiate autophagy. Its function is as follows. (Microbial infection) May play a significant role in mediating the biological activity of the HIV-1 Tat protein in vivo. Binds specifically to the activation domain of HIV-1 Tat and can also interact with the HIV-2 and EIAV Tat proteins in vivo. In Homo sapiens (Human), this protein is E3 ubiquitin-protein ligase TRIM32.